The primary structure comprises 391 residues: MSRTLQLAEQLISRPSVTPDDAGCQQILGERLARLGFTLETIESGPADFRVTNLWAVRRPAGTAPTKTLVFAGHTDVVPTGPVEQWTSHPFTPTHRGGKLYGRGACDMKTSVAAFVVSIEEFLAATPDPRLTLALLLTSDEEGPGVDGTVIVCNALAARGETIDYCIVGEPTAVERCGDMIKNGRRGTMSGKLTVHGVQGHIAYPHLAKNPVHAVAPALAELVAINAAGGWDAGNAYFQPTSWQISNFHAGTGASNVIPGSAVIDFNFRFSTESTPESLQKRVHAVLDAHGVDCTLAWTIGGLPFLTTPGELVSAVQAAIADETGIATELSTSGGTSDARFIAKICKQVVELGPVNASIHKIDEHIDVAEIETLKNIYKRTLERLEASLIQ.

His74 provides a ligand contact to Zn(2+). Asp76 is a catalytic residue. Asp107 contacts Zn(2+). The Proton acceptor role is filled by Glu141. Residues Glu142, Glu170, and His360 each contribute to the Zn(2+) site.

This sequence belongs to the peptidase M20A family. DapE subfamily. As to quaternary structure, homodimer. It depends on Zn(2+) as a cofactor. Requires Co(2+) as cofactor.

It carries out the reaction N-succinyl-(2S,6S)-2,6-diaminopimelate + H2O = (2S,6S)-2,6-diaminopimelate + succinate. It functions in the pathway amino-acid biosynthesis; L-lysine biosynthesis via DAP pathway; LL-2,6-diaminopimelate from (S)-tetrahydrodipicolinate (succinylase route): step 3/3. Catalyzes the hydrolysis of N-succinyl-L,L-diaminopimelic acid (SDAP), forming succinate and LL-2,6-diaminopimelate (DAP), an intermediate involved in the bacterial biosynthesis of lysine and meso-diaminopimelic acid, an essential component of bacterial cell walls. The polypeptide is Succinyl-diaminopimelate desuccinylase (Variovorax paradoxus (strain S110)).